The chain runs to 190 residues: Holliday junction branch migration complex subunit RuvA (190 aa).

The interval 1-64 is domain I; it reads MIGSLTGIIE…DNLTQLYGFL (64 aa). The segment at 65 to 142 is domain II; sequence DKQEQDYMRM…KMPIEETLII (78 aa). Residue lysine 143 is a region of interest, flexible linker. Residues 143 to 190 are domain III; sequence KEDDSLAALISLGYDKLKAFNAIQEIKANFPDDSIQEIIRKALQKLSQ.

It belongs to the RuvA family. In terms of assembly, homotetramer. Forms an RuvA(8)-RuvB(12)-Holliday junction (HJ) complex. HJ DNA is sandwiched between 2 RuvA tetramers; dsDNA enters through RuvA and exits via RuvB. An RuvB hexamer assembles on each DNA strand where it exits the tetramer. Each RuvB hexamer is contacted by two RuvA subunits (via domain III) on 2 adjacent RuvB subunits; this complex drives branch migration. In the full resolvosome a probable DNA-RuvA(4)-RuvB(12)-RuvC(2) complex forms which resolves the HJ.

The protein localises to the cytoplasm. In terms of biological role, the RuvA-RuvB-RuvC complex processes Holliday junction (HJ) DNA during genetic recombination and DNA repair, while the RuvA-RuvB complex plays an important role in the rescue of blocked DNA replication forks via replication fork reversal (RFR). RuvA specifically binds to HJ cruciform DNA, conferring on it an open structure. The RuvB hexamer acts as an ATP-dependent pump, pulling dsDNA into and through the RuvAB complex. HJ branch migration allows RuvC to scan DNA until it finds its consensus sequence, where it cleaves and resolves the cruciform DNA. In Ehrlichia chaffeensis (strain ATCC CRL-10679 / Arkansas), this protein is Holliday junction branch migration complex subunit RuvA.